A 227-amino-acid chain; its full sequence is GRF-interacting factor 1 (227 aa).

Positions 186-227 are disordered; it reads RSGSGAKEGSTSLSVDVRGGTSSGAQSGDGEYLKVGTEEEGS.

Belongs to the SS18 family. Interacts with several GRFs. Interacts with GRF10. Interacts with GRF1. In terms of tissue distribution, expressed in shoots, aerial roots, ears and tassels. Expressed in the shoot apical meristem (SAM), young leaf primordia, leaf margins, inflorescence meristem, floral meristem and spikelet meristem.

Transcription coactivator that plays a role in the regulation of meristematic function in leaves, stems and inflorescences. Regulates shoot architecture and meristem determinacy. Binds to the inflorescence architecture gene UB3 (unbranched3). Regulates the expression of several genes involved in inflorescence architecture. Component of a network formed by the microRNA396 (miRNA396), the GRFs and their interacting factors (GIFs) acting in the regulation of meristem function, at least partially through the control of cell proliferation. Associates with the core SWI/SNF chromatin-remodeling complex and specific GRFs to tightly regulate the transition between cell division and cell expansion in growing leaves. In Zea mays (Maize), this protein is GRF-interacting factor 1.